The following is a 134-amino-acid chain: Small ribosomal subunit protein uS9 (134 aa).

The disordered stretch occupies residues 109 to 134 (DARRTEPHKPSKSSKGPRAKRQKSYR). Residues 118-134 (PSKSSKGPRAKRQKSYR) show a composition bias toward basic residues.

The protein belongs to the universal ribosomal protein uS9 family.

In Methanococcus maripaludis (strain C5 / ATCC BAA-1333), this protein is Small ribosomal subunit protein uS9.